The following is a 261-amino-acid chain: Kallikrein-1 (261 aa).

A signal peptide spans 1–18 (MWFLILFLALSLGRNDAA). Residues 19-24 (PPVQSR) constitute a propeptide, activation peptide. The Peptidase S1 domain occupies 25–258 (VVGGYNCEMN…FTPWIKEVMK (234 aa)). Cystine bridges form between Cys-31–Cys-173, Cys-50–Cys-66, Cys-152–Cys-219, Cys-184–Cys-198, and Cys-209–Cys-234. The active-site Charge relay system is the His-65. A glycan (N-linked (GlcNAc...) asparagine) is linked at Asn-108. The Charge relay system role is filled by Asp-120. The active-site Charge relay system is Ser-213.

Belongs to the peptidase S1 family. Kallikrein subfamily. High levels in pancreas, submaxillary and parotid glands, spleen, and kidney.

It catalyses the reaction Preferential cleavage of Arg-|-Xaa bonds in small molecule substrates. Highly selective action to release kallidin (lysyl-bradykinin) from kininogen involves hydrolysis of Met-|-Xaa or Leu-|-Xaa.. The sequence is that of Kallikrein-1 (Ngfg) from Rattus norvegicus (Rat).